Reading from the N-terminus, the 346-residue chain is Phosphoribosylformylglycinamidine cyclo-ligase (346 aa).

This sequence belongs to the AIR synthase family.

The protein localises to the cytoplasm. The enzyme catalyses 2-formamido-N(1)-(5-O-phospho-beta-D-ribosyl)acetamidine + ATP = 5-amino-1-(5-phospho-beta-D-ribosyl)imidazole + ADP + phosphate + H(+). Its pathway is purine metabolism; IMP biosynthesis via de novo pathway; 5-amino-1-(5-phospho-D-ribosyl)imidazole from N(2)-formyl-N(1)-(5-phospho-D-ribosyl)glycinamide: step 2/2. The polypeptide is Phosphoribosylformylglycinamidine cyclo-ligase (Aliivibrio fischeri (strain ATCC 700601 / ES114) (Vibrio fischeri)).